The following is a 364-amino-acid chain: Ribosomal RNA large subunit methyltransferase M (364 aa).

S-adenosyl-L-methionine-binding positions include Ser194, 227–230, Asp246, Asp266, and Asp284; that span reads CPGG. The active-site Proton acceptor is the Lys313.

It belongs to the class I-like SAM-binding methyltransferase superfamily. RNA methyltransferase RlmE family. RlmM subfamily. In terms of assembly, monomer.

It localises to the cytoplasm. The enzyme catalyses cytidine(2498) in 23S rRNA + S-adenosyl-L-methionine = 2'-O-methylcytidine(2498) in 23S rRNA + S-adenosyl-L-homocysteine + H(+). Its function is as follows. Catalyzes the 2'-O-methylation at nucleotide C2498 in 23S rRNA. This Actinobacillus succinogenes (strain ATCC 55618 / DSM 22257 / CCUG 43843 / 130Z) protein is Ribosomal RNA large subunit methyltransferase M.